A 96-amino-acid chain; its full sequence is Protein Vpr (96 aa).

The interval 1–42 is homooligomerization; it reads MEQAPEDQGPQREPYNEWTLELLEELKSEAVRHFPRIWLHSL. 3 positions are modified to phosphoserine; by host: Ser79, Ser94, and Ser96.

Belongs to the HIV-1 VPR protein family. Homooligomer, may form homodimer. Interacts with p6-gag region of the Pr55 Gag precursor protein through a (Leu-X-X)4 motif near the C-terminus of the P6gag protein. Interacts with host UNG. May interact with host RAD23A/HHR23A. Interacts with host VPRBP/DCAF1, leading to hijack the CUL4A-RBX1-DDB1-DCAF1/VPRBP complex, mediating ubiquitination of host proteins such as TERT and ZGPAT and arrest of the cell cycle in G2 phase. In terms of processing, phosphorylated on several residues by host. These phosphorylations regulate VPR activity for the nuclear import of the HIV-1 pre-integration complex.

It localises to the virion. The protein resides in the host nucleus. Its subcellular location is the host extracellular space. Its function is as follows. During virus replication, may deplete host UNG protein, and incude G2-M cell cycle arrest. Acts by targeting specific host proteins for degradation by the 26S proteasome, through association with the cellular CUL4A-DDB1 E3 ligase complex by direct interaction with host VPRPB/DCAF-1. Cell cycle arrest reportedly occurs within hours of infection and is not blocked by antiviral agents, suggesting that it is initiated by the VPR carried into the virion. Additionally, VPR induces apoptosis in a cell cycle dependent manner suggesting that these two effects are mechanistically linked. Detected in the serum and cerebrospinal fluid of AIDS patient, VPR may also induce cell death to bystander cells. Functionally, during virus entry, plays a role in the transport of the viral pre-integration (PIC) complex to the host nucleus. This function is crucial for viral infection of non-dividing macrophages. May act directly at the nuclear pore complex, by binding nucleoporins phenylalanine-glycine (FG)-repeat regions. This chain is Protein Vpr, found in Homo sapiens (Human).